A 363-amino-acid polypeptide reads, in one-letter code: Peptide chain release factor 1 (363 aa).

An N5-methylglutamine modification is found at Gln237. Residues 284 to 296 are compositionally biased toward basic and acidic residues; that stretch reads EDEKRRSAEESTR. The interval 284–306 is disordered; sequence EDEKRRSAEESTRRSLVASGDRS.

The protein belongs to the prokaryotic/mitochondrial release factor family. In terms of processing, methylated by PrmC. Methylation increases the termination efficiency of RF1.

Its subcellular location is the cytoplasm. Peptide chain release factor 1 directs the termination of translation in response to the peptide chain termination codons UAG and UAA. The polypeptide is Peptide chain release factor 1 (Shewanella putrefaciens (strain CN-32 / ATCC BAA-453)).